The sequence spans 114 residues: Large ribosomal subunit protein uL22 (114 aa).

This sequence belongs to the universal ribosomal protein uL22 family. In terms of assembly, part of the 50S ribosomal subunit.

This protein binds specifically to 23S rRNA; its binding is stimulated by other ribosomal proteins, e.g. L4, L17, and L20. It is important during the early stages of 50S assembly. It makes multiple contacts with different domains of the 23S rRNA in the assembled 50S subunit and ribosome. In terms of biological role, the globular domain of the protein is located near the polypeptide exit tunnel on the outside of the subunit, while an extended beta-hairpin is found that lines the wall of the exit tunnel in the center of the 70S ribosome. This is Large ribosomal subunit protein uL22 from Ehrlichia chaffeensis (strain ATCC CRL-10679 / Arkansas).